The sequence spans 774 residues: E3 ubiquitin-protein ligase RFWD3 (774 aa).

Phosphoserine; by ATM and ATR is present on residues serine 46 and serine 63. Disordered stretches follow at residues 95–116, 139–225, and 257–280; these read NPRTSEQHRQGSDGNHTIPASS, PSSS…AEYG, and GGKTLPKQPSPQKSEPLLPSASMD. The segment covering 106–116 has biased composition (polar residues); the sequence is SDGNHTIPASS. The span at 150–162 shows a compositional bias: basic residues; sequence RTRRRVSASRRAR. The segment covering 211 to 221 has biased composition (low complexity); the sequence is SSSSDSDSDSS. Residues 287-331 form an RING-type; degenerate zinc finger; it reads CTICLEQWTNAGDHRLSALRCGHLFGYRCISTWLKGQVRKCPQCN. Residues 361–413 adopt a coiled-coil conformation; the sequence is SLLKEQMLRKQAELESAQCRLQLQVLTDKCTRLQRRVQDLQKLTSHQSQNLQQ. 3 WD repeats span residues 495 to 537, 539 to 577, and 583 to 628; these read MHGK…QTYN, GRPVWSCCWCLDEANYIYAGLANGSILVYDVRNTSSHVQ, and KARC…SHWP.

In terms of assembly, interacts with MDM2 and p53/TP53. Binds to the RPA complex via direct interaction with RPA2. Interacts with RAD51. Phosphorylated at Ser-46 and Ser-63 upon DNA damage by ATM or ATR. ATM phosphorylation occurs at early times upon DNA damage, while ATR is the major kinase at later times. Phosphorylation by ATM and ATR is required to stabilize p53/TP53. Part of the phosphorylation depends upon RPA2 presence.

It localises to the nucleus. It is found in the PML body. The protein localises to the cytoplasm. The catalysed reaction is S-ubiquitinyl-[E2 ubiquitin-conjugating enzyme]-L-cysteine + [acceptor protein]-L-lysine = [E2 ubiquitin-conjugating enzyme]-L-cysteine + N(6)-ubiquitinyl-[acceptor protein]-L-lysine.. It participates in protein modification; protein ubiquitination. Its function is as follows. E3 ubiquitin-protein ligase required for the repair of DNA interstrand cross-links (ICL) in response to DNA damage. Plays a key role in RPA-mediated DNA damage signaling and repair. Acts by mediating ubiquitination of the RPA complex (RPA1, RPA2 and RPA3 subunits) and RAD51 at stalled replication forks, leading to remove them from DNA damage sites and promote homologous recombination. Also mediates the ubiquitination of p53/TP53 in the late response to DNA damage, and acts as a positive regulator of p53/TP53 stability, thereby regulating the G1/S DNA damage checkpoint. May act by catalyzing the formation of short polyubiquitin chains on p53/TP53 that are not targeted to the proteasome. In response to ionizing radiation, interacts with MDM2 and enhances p53/TP53 ubiquitination, possibly by restricting MDM2 from extending polyubiquitin chains on ubiquitinated p53/TP53. Required to translesion DNA synthesis across DNA-protein cross-link adducts by catalyzing ubiquitination of proteins on single-stranded DNA (ssDNA). The protein is E3 ubiquitin-protein ligase RFWD3 of Homo sapiens (Human).